The sequence spans 1480 residues: Cystic fibrosis transmembrane conductance regulator (1480 aa).

At 1-77 (MQRSPLEKAS…KLINALRRCF (77 aa)) the chain is on the cytoplasmic side. The chain crosses the membrane as a helical span at residues 78–98 (FWRFMFYGILLYLGEVTKAVQ). The region spanning 81–365 (FMFYGILLYL…WAVQTWYDSL (285 aa)) is the ABC transmembrane type-1 1 domain. Over 99 to 122 (PLLLGRIIASYDPDNKTERSIAIY) the chain is Extracellular. The helical transmembrane segment at 123 to 146 (LGIGLCLLFIVRTLLLHPAIFGLH) threads the bilayer. Topologically, residues 147-195 (HIGMQMRIAMFSLIYKKTLKLSSRVLDKISIGQLVSLLSNNLNKFDEGL) are cytoplasmic. A helical membrane pass occupies residues 196–216 (ALAHFVWIAPLQVALLMGLIW). At 217–222 (ELLQAS) the chain is on the extracellular side. The chain crosses the membrane as a helical span at residues 223-243 (AFCGLGFLIVLALFQAGLGRM). The Cytoplasmic segment spans residues 244 to 298 (MMKYRDQRAGKINERLVITSEMIENIQSVKAYCWEEAMEKMIENLRQTELKLTRK). The chain crosses the membrane as a helical span at residues 299–319 (AAYVRYFNSSAFFFSGFFVVF). Topologically, residues 320–339 (LSVLPYALIKGIVLRKIFTT) are extracellular. The chain crosses the membrane as a helical span at residues 340–358 (ISFCIVLRMAVTRQFPWAV). Residues 359-858 (QTWYDSLGAI…YLRYITLHKS (500 aa)) lie on the Cytoplasmic side of the membrane. Residues Trp401, Ser434, 458-465 (GSTGAGKT), and Gln493 contribute to the ATP site. One can recognise an ABC transporter 1 domain in the interval 423-646 (NGDDNLFFSN…RPDFSSKLMG (224 aa)). Cys524 carries S-palmitoyl cysteine lipidation. A phosphoserine mark is found at Ser549 and Ser660. The disordered R region stretch occupies residues 654–831 (SSERRNSILT…EEINEEDLKE (178 aa)). Ser670 is subject to Phosphoserine; by PKA. Position 686 is a phosphoserine (Ser686). A Glycyl lysine isopeptide (Lys-Gly) (interchain with G-Cter in ubiquitin) cross-link involves residue Lys688. Ser700 and Ser712 each carry phosphoserine. Position 717 is a phosphothreonine (Thr717). Ser737, Ser753, Ser768, Ser790, Ser795, and Ser813 each carry phosphoserine. The chain crosses the membrane as a helical span at residues 859 to 879 (LIFVLIWCLVIFLAEVAASLV). The 297-residue stretch at 859 to 1155 (LIFVLIWCLV…AVNSSIDVDS (297 aa)) folds into the ABC transmembrane type-1 2 domain. The Extracellular segment spans residues 880–918 (VLWFLGNTPFQDKGNSTYSRNNSYAVIITNTSSYYVFYI). 3 N-linked (GlcNAc...) asparagine glycosylation sites follow: Asn894, Asn900, and Asn909. Residues 919–939 (YVGVADTLLALGFFRGLPLVH) traverse the membrane as a discontinuously helical segment. The Cytoplasmic segment spans residues 940-990 (TLITVSKILHHKMLHSVLQAPMSTLNTLKAGGILNRFSKDIAILDDLLPLT). A helical membrane pass occupies residues 991 to 1011 (IFDFIQLLLIVIGAIAVVSVL). Topologically, residues 1012–1013 (QP) are extracellular. The helical transmembrane segment at 1014-1034 (YILLATVPVIAAFILLRAYFL) threads the bilayer. At 1035–1095 (QTSQQLKQLE…TANWFLYLAT (61 aa)) the chain is on the cytoplasmic side. The chain crosses the membrane as a helical span at residues 1096–1116 (LRWFQMRIEIIFVIFFIAVTF). Over 1117–1130 (ISILTTGEGEGTVG) the chain is Extracellular. The chain crosses the membrane as a helical span at residues 1131 to 1151 (IILTLAMNIMSTLQWAVNSSI). Residues 1152 to 1480 (DVDSLMRSVS…TEEEVQETRL (329 aa)) lie on the Cytoplasmic side of the membrane. The 234-residue stretch at 1210 to 1443 (MTIKDLTAKY…KSLFQQAISH (234 aa)) folds into the ABC transporter 2 domain. Residues Tyr1219 and 1244 to 1251 (GRTGSGKS) each bind ATP. The tract at residues 1386 to 1480 (RALKQAFADC…TEEEVQETRL (95 aa)) is interaction with GORASP2. Residue Cys1395 is the site of S-palmitoyl cysteine attachment. Residues Ser1444 and Ser1456 each carry the phosphoserine modification. The tract at residues 1452–1480 (HRNSSKYKSPPQIASLKEETEEEVQETRL) is disordered. Residues 1470-1480 (ETEEEVQETRL) show a composition bias toward acidic residues. Positions 1478 to 1480 (TRL) match the PDZ-binding motif.

It belongs to the ABC transporter superfamily. ABCC family. CFTR transporter (TC 3.A.1.202) subfamily. Monomer; does not require oligomerization for channel activity. May form oligomers in the membrane. Interacts with SLC26A3, SLC26A6 and NHERF1. Interacts with SHANK2. Interacts with MYO6. Interacts (via C-terminus) with GOPC (via PDZ domain); this promotes CFTR internalization and thereby decreases channel activity. Interacts with SLC4A7 through NHERF1. Found in a complex with MYO5B and RAB11A. Interacts with ANO1. Interacts with SLC26A8. Interacts with AHCYL1; the interaction increases CFTR activity. Interacts with CSE1L. The core-glycosylated form interacts with GORASP2 (via PDZ GRASP-type 1 domain) in respone to ER stress. Interacts with MARCHF2; the interaction leads to CFTR ubiqtuitination and degradation. Interacts with ADGRG2. N-glycosylated. In terms of processing, phosphorylated; cAMP treatment promotes phosphorylation and activates the channel. Dephosphorylation decreases the ATPase activity (in vitro). Phosphorylation at PKA sites activates the channel. Phosphorylation at PKC sites enhances the response to phosphorylation by PKA. Phosphorylated by AMPK; this inhibits channel activity. Post-translationally, ubiquitinated, leading to its degradation in the lysosome. Deubiquitination by USP10 in early endosomes enhances its endocytic recycling to the cell membrane. Ubiquitinated by RNF185 during ER stress. Ubiquitinated by MARCHF2.

Its subcellular location is the apical cell membrane. The protein resides in the early endosome membrane. It localises to the cell membrane. The protein localises to the recycling endosome membrane. It is found in the endoplasmic reticulum membrane. Its subcellular location is the nucleus. The catalysed reaction is ATP + H2O + closed Cl(-) channel = ADP + phosphate + open Cl(-) channel.. The enzyme catalyses chloride(in) = chloride(out). It catalyses the reaction hydrogencarbonate(in) = hydrogencarbonate(out). It carries out the reaction ATP + H2O = ADP + phosphate + H(+). In terms of biological role, epithelial ion channel that plays an important role in the regulation of epithelial ion and water transport and fluid homeostasis. Mediates the transport of chloride ions across the cell membrane. Possesses an intrinsic ATPase activity and utilizes ATP to gate its channel; the passive flow of anions through the channel is gated by cycles of ATP binding and hydrolysis by the ATP-binding domains. The ion channel is also permeable to HCO(3)(-); selectivity depends on the extracellular chloride concentration. Exerts its function also by modulating the activity of other ion channels and transporters. Contributes to the regulation of the pH and the ion content of the epithelial fluid layer. Modulates the activity of the epithelial sodium channel (ENaC) complex, in part by regulating the cell surface expression of the ENaC complex. May regulate bicarbonate secretion and salvage in epithelial cells by regulating the transporter SLC4A7. Can inhibit the chloride channel activity of ANO1. Plays a role in the chloride and bicarbonate homeostasis during sperm epididymal maturation and capacitation. This Ateles geoffroyi (Black-handed spider monkey) protein is Cystic fibrosis transmembrane conductance regulator.